Here is a 230-residue protein sequence, read N- to C-terminus: uncharacterized protein (230 aa).

Positions 1–21 are cleaved as a signal peptide; the sequence is MARYDARLRGIGKAHACSAFA. The disordered stretch occupies residues 47-190; that stretch reads SASVQENFIA…TVQTSSSGDP (144 aa). Polar residues predominate over residues 141–150; the sequence is PQSQTSANSQ. The segment covering 151–165 has biased composition (basic and acidic residues); the sequence is KKPEIRCRERSKNAR. Residues 173–188 are compositionally biased toward polar residues; the sequence is AVATNEAETVQTSSSG.

The protein to R.meliloti RA0936 and y4aO.

This is an uncharacterized protein from Sinorhizobium fredii (strain NBRC 101917 / NGR234).